Reading from the N-terminus, the 372-residue chain is Putative RING-H2 finger protein ATL21A (372 aa).

The N-terminal stretch at Met-1 to Ala-20 is a signal peptide. The helical transmembrane segment at Ile-242–Val-262 threads the bilayer. The segment at Cys-320–Arg-362 adopts an RING-type; atypical zinc-finger fold.

The protein belongs to the RING-type zinc finger family. ATL subfamily.

Its subcellular location is the membrane. The enzyme catalyses S-ubiquitinyl-[E2 ubiquitin-conjugating enzyme]-L-cysteine + [acceptor protein]-L-lysine = [E2 ubiquitin-conjugating enzyme]-L-cysteine + N(6)-ubiquitinyl-[acceptor protein]-L-lysine.. It participates in protein modification; protein ubiquitination. The sequence is that of Putative RING-H2 finger protein ATL21A (ATL21A) from Arabidopsis thaliana (Mouse-ear cress).